The chain runs to 86 residues: Large ribosomal subunit protein bL27c (86 aa).

Residues Met1–Arg20 are disordered. The segment covering Ser7–Gln19 has biased composition (polar residues).

The protein belongs to the bacterial ribosomal protein bL27 family.

It is found in the plastid. Its subcellular location is the chloroplast. This is Large ribosomal subunit protein bL27c (rpl27) from Guillardia theta (Cryptophyte).